A 164-amino-acid polypeptide reads, in one-letter code: MTRDLAPALQALSPLLGSWAGRGAGKYPTIRPFEYLEEVVFAHVGKPFLTYTQQTRAVADGKPLHSETGYLRVCRPGCVELVLAHPSGITEIEVGTYSVTGDVIELELSTRADGSIGLAPTAKEVTALDRSYRIDGDELSYSLQMRAVGQPLQDHLAAVLHRQR.

A GXWXGXG motif is present at residues 17–23 (GSWAGRG). H155 contributes to the heme b binding site.

The protein belongs to the nitrobindin family. Homodimer. It depends on heme b as a cofactor.

The enzyme catalyses peroxynitrite = nitrate. It functions in the pathway nitrogen metabolism. Functionally, heme-binding protein able to scavenge peroxynitrite and to protect free L-tyrosine against peroxynitrite-mediated nitration, by acting as a peroxynitrite isomerase that converts peroxynitrite to nitrate. Therefore, this protein likely plays a role in peroxynitrite sensing and in the detoxification of reactive nitrogen and oxygen species (RNS and ROS, respectively). Is able to bind nitric oxide (NO) in vitro, but may act as a sensor of peroxynitrite levels in vivo. This Mycobacterium bovis (strain BCG / Pasteur 1173P2) protein is Peroxynitrite isomerase 2.